The sequence spans 155 residues: Endoribonuclease YbeY (155 aa).

Residues His-114, His-118, and His-124 each coordinate Zn(2+).

Belongs to the endoribonuclease YbeY family. The cofactor is Zn(2+).

The protein resides in the cytoplasm. Its function is as follows. Single strand-specific metallo-endoribonuclease involved in late-stage 70S ribosome quality control and in maturation of the 3' terminus of the 16S rRNA. In Escherichia coli O17:K52:H18 (strain UMN026 / ExPEC), this protein is Endoribonuclease YbeY.